The sequence spans 280 residues: Acyl-[acyl-carrier-protein]--UDP-N-acetylglucosamine O-acyltransferase (280 aa).

This sequence belongs to the transferase hexapeptide repeat family. LpxA subfamily. As to quaternary structure, homotrimer.

Its subcellular location is the cytoplasm. The catalysed reaction is a (3R)-hydroxyacyl-[ACP] + UDP-N-acetyl-alpha-D-glucosamine = a UDP-3-O-[(3R)-3-hydroxyacyl]-N-acetyl-alpha-D-glucosamine + holo-[ACP]. The protein operates within glycolipid biosynthesis; lipid IV(A) biosynthesis; lipid IV(A) from (3R)-3-hydroxytetradecanoyl-[acyl-carrier-protein] and UDP-N-acetyl-alpha-D-glucosamine: step 1/6. Functionally, involved in the biosynthesis of lipid A, a phosphorylated glycolipid that anchors the lipopolysaccharide to the outer membrane of the cell. This chain is Acyl-[acyl-carrier-protein]--UDP-N-acetylglucosamine O-acyltransferase, found in Chlamydia trachomatis serovar L2 (strain ATCC VR-902B / DSM 19102 / 434/Bu).